An 86-amino-acid polypeptide reads, in one-letter code: MANTKSAIKAARKSLRLHDRNQGVKTRLKTLHKKLETAVKSGDAASSKAAAVAYTSAVDKAVKSGVVHRNVAARAKSHVAKIVFAK.

The interval Met1–Asn21 is disordered.

Belongs to the bacterial ribosomal protein bS20 family.

In terms of biological role, binds directly to 16S ribosomal RNA. The protein is Small ribosomal subunit protein bS20 of Opitutus terrae (strain DSM 11246 / JCM 15787 / PB90-1).